The sequence spans 86 residues: Large ribosomal subunit protein bL31 (86 aa).

Residues 65-86 are disordered; the sequence is YGMASSDSSEQKDKSSEEKKES. The span at 73–86 shows a compositional bias: basic and acidic residues; it reads SEQKDKSSEEKKES.

It belongs to the bacterial ribosomal protein bL31 family. Type A subfamily. In terms of assembly, part of the 50S ribosomal subunit.

Binds the 23S rRNA. The sequence is that of Large ribosomal subunit protein bL31 from Prochlorococcus marinus (strain NATL2A).